Consider the following 733-residue polypeptide: 1,4-alpha-glucan branching enzyme GlgB (733 aa).

Asp-413 serves as the catalytic Nucleophile. Glu-466 functions as the Proton donor in the catalytic mechanism.

It belongs to the glycosyl hydrolase 13 family. GlgB subfamily. As to quaternary structure, monomer.

The catalysed reaction is Transfers a segment of a (1-&gt;4)-alpha-D-glucan chain to a primary hydroxy group in a similar glucan chain.. It functions in the pathway glycan biosynthesis; glycogen biosynthesis. Its function is as follows. Catalyzes the formation of the alpha-1,6-glucosidic linkages in glycogen by scission of a 1,4-alpha-linked oligosaccharide from growing alpha-1,4-glucan chains and the subsequent attachment of the oligosaccharide to the alpha-1,6 position. The chain is 1,4-alpha-glucan branching enzyme GlgB from Leifsonia xyli subsp. xyli (strain CTCB07).